The sequence spans 245 residues: MQAIAIIAASGVGKRMKLPSGKTKQYLKLGVYPVIYYALSAFQQASSVEAIFVATLPSHIAYLQKMARRYGFHKVKFVIEGGKERQDSIFNCVEKIREVYGDDGALQDKVILIHDGVRPFIQPNEIDEIAELSKSFGACVPATKPKDTIKYIDGDDNRFFGETLDRSKLLQVQTPQGFRADLIMSAHQKAQSDSFYATDDAALTEAYFPEQKIKIFEMGYHNIKITTPEDMDLGKAILKRLRQSK.

It belongs to the IspD/TarI cytidylyltransferase family. IspD subfamily.

The enzyme catalyses 2-C-methyl-D-erythritol 4-phosphate + CTP + H(+) = 4-CDP-2-C-methyl-D-erythritol + diphosphate. It functions in the pathway isoprenoid biosynthesis; isopentenyl diphosphate biosynthesis via DXP pathway; isopentenyl diphosphate from 1-deoxy-D-xylulose 5-phosphate: step 2/6. Catalyzes the formation of 4-diphosphocytidyl-2-C-methyl-D-erythritol from CTP and 2-C-methyl-D-erythritol 4-phosphate (MEP). This is 2-C-methyl-D-erythritol 4-phosphate cytidylyltransferase from Chloroherpeton thalassium (strain ATCC 35110 / GB-78).